The following is a 2799-amino-acid chain: Peramine synthetase ppzA (2799 aa).

The adenylation 1 stretch occupies residues 270–666 (QERCRLQPNA…VGRKDTQVKI (397 aa)). The Carrier 1 domain occupies 799–875 (QPLTGMERLL…DLSRQSRYIE (77 aa)). At serine 836 the chain carries O-(pantetheine 4'-phosphoryl)serine. Residues 914 to 1327 (DAYPCTPLQE…ITILTTEDLE (414 aa)) form a condensation region. Residues 1350 to 1743 (DKVQARPNAP…TLSFVRRKDT (394 aa)) form an adenylation 2 region. Positions 1874–1970 (LEIGCGSGMM…EYLVKLIQDI (97 aa)) are methylation (Met) domain. The region spanning 2290–2368 (SPTTDMEKEL…RLLLDCCCDD (79 aa)) is the Carrier 2 domain. At serine 2327 the chain carries O-(pantetheine 4'-phosphoryl)serine. A thiesterase (TE) domain region spans residues 2420–2737 (TVLLTGANGF…LADMLQDLED (318 aa)).

Belongs to the NRP synthetase family. Pantetheine 4'-phosphate is required as a cofactor.

The enzyme catalyses (S)-1-pyrroline-5-carboxylate + L-arginine + S-adenosyl-L-methionine + 2 ATP = peramine + 2 AMP + S-adenosyl-L-homocysteine + 2 diphosphate + H2O + 2 H(+). It functions in the pathway secondary metabolite biosynthesis. Functionally, nonribosomal peptide synthetase; part of the gene cluster that mediates the biosynthesis of pyrrolopyrazines, secondary metabolites showing insecticidal activity. The single multifunctional NRPS ppzA is responsible for the biosynthesis of peramine. The condensation domain of ppzA is proposed to catalyze formation of a peptide bond between 1-pyrroline-5-carboxylate and arginine. The methylation domain of ppzA would catalyze the N-methylation of the alpha-amino group of arginine. The reductase domain is proposed to be responsible for reduction of the thioester and the cyclization to form an iminium ion resulting in release from the peptide synthetase. Deprotonation of this intermediate and oxidation of the pyrroline ring would give rise to peramine. This final oxidation to give the pyrrole functionality may be spontaneous. In Epichloe species that produce only peramine, the peramine synthetase gene is not localized in a gene cluster, in contrast to Metarhizium species that contain additional pyrrolopyrazine biosynthesis genes. The 2-oxoglutarate-Fe(II) type oxidoreductase ppzC hydroxylates peramine to yield the newly identified compound 8-hydroxyperamine whereas ppzD converts L-proline into trans-4-hydroxy-L-proline, a precursor of peramine biosynthesis. This Metarhizium majus (strain ARSEF 297) protein is Peramine synthetase ppzA.